The following is a 120-amino-acid chain: UPF0295 protein Aflv_0370 (120 aa).

A run of 2 helical transmembrane segments spans residues 12–32 and 42–62; these read IRTFALSLIFIGFFVMYGGIF and LFMILGLLFIIASTVVYFWIG.

The protein belongs to the UPF0295 family.

It is found in the cell membrane. This chain is UPF0295 protein Aflv_0370, found in Anoxybacillus flavithermus (strain DSM 21510 / WK1).